Reading from the N-terminus, the 251-residue chain is Aliphatic sulfonates import ATP-binding protein SsuB (251 aa).

Positions 3 to 231 constitute an ABC transporter domain; sequence VSIDGVSKYF…PRSKTSESFQ (229 aa). 39–46 is an ATP binding site; it reads GPSGCGKS.

It belongs to the ABC transporter superfamily. Aliphatic sulfonates importer (TC 3.A.1.17.2) family. As to quaternary structure, the complex is composed of two ATP-binding proteins (SsuB), two transmembrane proteins (SsuC) and a solute-binding protein (SsuA).

It localises to the cell membrane. It catalyses the reaction ATP + H2O + aliphatic sulfonate-[sulfonate-binding protein]Side 1 = ADP + phosphate + aliphatic sulfonateSide 2 + [sulfonate-binding protein]Side 1.. Its function is as follows. Part of the ABC transporter complex SsuABC involved in aliphatic sulfonates import. Responsible for energy coupling to the transport system. This Bacillus cereus (strain ATCC 10987 / NRS 248) protein is Aliphatic sulfonates import ATP-binding protein SsuB.